Reading from the N-terminus, the 312-residue chain is Bifunctional pinoresinol-lariciresinol reductase 1 (312 aa).

NADP(+)-binding positions include Gly10 to Gly16, Arg35, and Lys44. Catalysis depends on Lys136, which acts as the Proton acceptor. NADP(+) is bound at residue Arg140. A substrate-binding site is contributed by His268.

It belongs to the NmrA-type oxidoreductase family. Isoflavone reductase subfamily. In terms of assembly, dimer. Expressed in seeds and roots, but not in stems. Detected in leaves.

It catalyses the reaction (-)-lariciresinol + NADP(+) = (-)-pinoresinol + NADPH + H(+). The enzyme catalyses (+)-secoisolariciresinol + NADP(+) = (-)-lariciresinol + NADPH + H(+). Its function is as follows. Reductase involved in lignan biosynthesis. Catalyzes the enantioselective conversion of (-)-pinoresinol into (-)-lariciresinol and of (-)-lariciresinol into (+)-secoisolariciresinol. Abstracts the 4R-hydride from the NADPH cofactor during catalysis. This Linum usitatissimum (Flax) protein is Bifunctional pinoresinol-lariciresinol reductase 1 (PLR_Lu1).